The primary structure comprises 176 residues: I-Kappa-B like protein G1 (176 aa).

3 ANK repeats span residues 56–88 (EGRQ…DINS), 93–123 (FGNT…ELGA), and 127–156 (LYKT…VCDD).

The protein belongs to the polydnaviridae I-Kappa-B-like protein family.

Suppresses the host immune response through NF-kappa-B inactivation. Possesses ankyrin repeat domains required for NF-kappa-B binding but lacks the regulatory regions required for dissociation from NF-kappa-B and degradation. Therefore, prevents host NF-kappa-B release and subsequent activation. The chain is I-Kappa-B like protein G1 (G3) from Microplitis demolitor (Parasitoid wasp).